We begin with the raw amino-acid sequence, 89 residues long: Dynein light chain 1, cytoplasmic (89 aa).

The protein belongs to the dynein light chain family. Interacts with spn-F. Forms ternary complexes with spn-F and IKKepsilon. In terms of tissue distribution, ubiquitous.

The protein resides in the cytoplasm. The protein localises to the cytoskeleton. In terms of biological role, acts as a non-catalytic accessory component of a dynein complex. The polypeptide is Dynein light chain 1, cytoplasmic (ctp) (Drosophila melanogaster (Fruit fly)).